The primary structure comprises 71 residues: Exodeoxyribonuclease 7 small subunit (71 aa).

It belongs to the XseB family. In terms of assembly, heterooligomer composed of large and small subunits.

The protein localises to the cytoplasm. It carries out the reaction Exonucleolytic cleavage in either 5'- to 3'- or 3'- to 5'-direction to yield nucleoside 5'-phosphates.. Functionally, bidirectionally degrades single-stranded DNA into large acid-insoluble oligonucleotides, which are then degraded further into small acid-soluble oligonucleotides. This is Exodeoxyribonuclease 7 small subunit from Streptococcus thermophilus (strain ATCC BAA-250 / LMG 18311).